Reading from the N-terminus, the 113-residue chain is Beta-microseminoprotein (113 aa).

The first 20 residues, 1–20, serve as a signal peptide directing secretion; it reads MKARLGSLLVLATLVTASNA. Cystine bridges form between Cys-22–Cys-69, Cys-38–Cys-61, Cys-56–Cys-92, Cys-59–Cys-68, and Cys-83–Cys-106.

The protein belongs to the beta-microseminoprotein family. Homodimer; Interacts with PI16.

Its subcellular location is the secreted. This Rattus norvegicus (Rat) protein is Beta-microseminoprotein (Msmb).